A 395-amino-acid polypeptide reads, in one-letter code: Torsin-3A (395 aa).

Residues 1–24 form the signal peptide; sequence MFFGAFWLLLLLLLPPLRPPGAQG. A glycan (N-linked (GlcNAc...) asparagine) is linked at Asn-120. An ATP-binding site is contributed by 165 to 172; that stretch reads GWSGTGKN.

The protein belongs to the ClpA/ClpB family. Torsin subfamily. As to quaternary structure, may not form homohexamers. In terms of processing, N-glycosylated.

Its subcellular location is the cytoplasm. The protein resides in the endoplasmic reticulum lumen. The sequence is that of Torsin-3A (Tor3a) from Rattus norvegicus (Rat).